Here is a 330-residue protein sequence, read N- to C-terminus: Phenylalanine--tRNA ligase alpha subunit (330 aa).

Glu-246 is a Mg(2+) binding site.

The protein belongs to the class-II aminoacyl-tRNA synthetase family. Phe-tRNA synthetase alpha subunit type 1 subfamily. In terms of assembly, tetramer of two alpha and two beta subunits. It depends on Mg(2+) as a cofactor.

Its subcellular location is the cytoplasm. It catalyses the reaction tRNA(Phe) + L-phenylalanine + ATP = L-phenylalanyl-tRNA(Phe) + AMP + diphosphate + H(+). The chain is Phenylalanine--tRNA ligase alpha subunit from Sulfurimonas denitrificans (strain ATCC 33889 / DSM 1251) (Thiomicrospira denitrificans (strain ATCC 33889 / DSM 1251)).